A 414-amino-acid chain; its full sequence is Esterase FrsA (414 aa).

The protein belongs to the FrsA family.

The enzyme catalyses a carboxylic ester + H2O = an alcohol + a carboxylate + H(+). In terms of biological role, catalyzes the hydrolysis of esters. In Shigella boydii serotype 18 (strain CDC 3083-94 / BS512), this protein is Esterase FrsA.